Consider the following 192-residue polypeptide: Ribose 1,5-bisphosphate phosphokinase PhnN (192 aa).

15–22 serves as a coordination point for ATP; it reads GPSGAGKD.

The protein belongs to the ribose 1,5-bisphosphokinase family.

It catalyses the reaction alpha-D-ribose 1,5-bisphosphate + ATP = 5-phospho-alpha-D-ribose 1-diphosphate + ADP. It functions in the pathway metabolic intermediate biosynthesis; 5-phospho-alpha-D-ribose 1-diphosphate biosynthesis; 5-phospho-alpha-D-ribose 1-diphosphate from D-ribose 5-phosphate (route II): step 3/3. In terms of biological role, catalyzes the phosphorylation of ribose 1,5-bisphosphate to 5-phospho-D-ribosyl alpha-1-diphosphate (PRPP). The sequence is that of Ribose 1,5-bisphosphate phosphokinase PhnN from Brucella melitensis biotype 2 (strain ATCC 23457).